Here is a 483-residue protein sequence, read N- to C-terminus: Proline--tRNA ligase (483 aa).

This sequence belongs to the class-II aminoacyl-tRNA synthetase family. ProS type 3 subfamily. Homodimer.

Its subcellular location is the cytoplasm. It catalyses the reaction tRNA(Pro) + L-proline + ATP = L-prolyl-tRNA(Pro) + AMP + diphosphate. Catalyzes the attachment of proline to tRNA(Pro) in a two-step reaction: proline is first activated by ATP to form Pro-AMP and then transferred to the acceptor end of tRNA(Pro). The sequence is that of Proline--tRNA ligase from Mycoplasma genitalium (strain ATCC 33530 / DSM 19775 / NCTC 10195 / G37) (Mycoplasmoides genitalium).